A 561-amino-acid polypeptide reads, in one-letter code: Alpha-1D adrenergic receptor (561 aa).

Residues 1–90 (MTFRDILSVT…VGGLVVSAQG (90 aa)) are Extracellular-facing. The segment at 10–71 (TFEGPRSSSS…SSTGEPGAAA (62 aa)) is disordered. The span at 21 to 56 (GGSGAGGGAGTVGPEGGAVGGVPGATGGGAVVGTGS) shows a compositional bias: gly residues. N-linked (GlcNAc...) asparagine glycosylation is found at Asn-60 and Asn-76. A helical transmembrane segment spans residues 91-115 (VGVGVFLAAFILTAVAGNLLVILSV). Topologically, residues 116-127 (ACNRHLQTVTNY) are cytoplasmic. Residues 128-153 (FIVNLAVADLLLSAAVLPFSATMEVL) form a helical membrane-spanning segment. The Extracellular segment spans residues 154–163 (GFWAFGRTFC). The chain crosses the membrane as a helical span at residues 164-186 (DVWAAVDVLCCTASILSLCTISV). The Cytoplasmic segment spans residues 187 to 207 (DRYVGVRHSLKYPAIMTERKA). The helical transmembrane segment at 208–232 (AAILALLWAVALVVSVGPLLGWKEP) threads the bilayer. Residues 233–245 (VPPDERFCGITEE) lie on the Extracellular side of the membrane. The helical transmembrane segment at 246–269 (VGYAIFSSVCSFYLPMAVIVVMYC) threads the bilayer. The Cytoplasmic portion of the chain corresponds to 270 to 342 (RVYVVARSTT…KFSREKKAAK (73 aa)). A helical membrane pass occupies residues 343 to 367 (TLAIVVGVFVLCWFPFFFVLPLGSL). Topologically, residues 368 to 374 (FPQLKPS) are extracellular. A helical membrane pass occupies residues 375–399 (EGVFKVIFWLGYFNSCVNPLIYPCS). At 400-561 (SREFKRAFLR…DYSNLRETDI (162 aa)) the chain is on the cytoplasmic side. A lipid anchor (S-palmitoyl cysteine) is attached at Cys-413. Positions 452–481 (APLALTAHPGAGSADTPETQDSVSSSRKPA) are disordered. Residues 467–479 (TPETQDSVSSSRK) are compositionally biased toward polar residues.

The protein belongs to the G-protein coupled receptor 1 family. Adrenergic receptor subfamily. ADRA1D sub-subfamily. As to quaternary structure, interacts with FLNA (via filamin repeat 21); increases PKA-mediated phosphorylation of FLNA. Post-translationally, palmitoylated. Palmitoylation by ZDHHC21 may increase the expression of the receptor and regulate downstream signaling. As to expression, vas deferens, hippocampus, cerebral cortex, aorta, brain stem, heart and spleen.

Its subcellular location is the cell membrane. In terms of biological role, this alpha-adrenergic receptor mediates its effect through the influx of extracellular calcium. This Rattus norvegicus (Rat) protein is Alpha-1D adrenergic receptor (Adra1d).